The sequence spans 841 residues: MSALQEIPSPISNMQTSNFAHVIFQNVAKSYLPNAPLECHYTLTQYIHPHPKDWVGIFKVGWSTPRDYFTFLWSLMPEKYVAESTCNCVLTFQGYYLPNDDGEFYQFCYVTHKGEIRGASTPFQFRASSPVDELLTMEDEGHSDMLVVTTKTGLLELKIEKTMKEKEELVKITTVLEKEVLQLREHVEGLESEFLREQKRSEQLSSEREELFNASEILRNESDEAKRKCKEMSAKIIQLEEDIMLVTQKAIAKETELDSLKDKLKKVVLEKDQLECQLKYEKDEKDLYKVHLKNTEIENTKLLTEVQTLKNLDTNKENLISHYKEELGKLQICLADKEKMNKELLQNSSNKEDIAFLKQQLRKLEDQHQASRQEVSLMSRELSEAVNKRDKTMADLHSARLDTDSVRMQLADALAQLSMRDEQQQKSNPFAKKDQGADNNRVEQELRKEVEDLKLRLQMAADHYKDKFKECQKLQKQVVKLTEQLKATENQQKERELFCATEAAAVTVMKQCTPPVSPFTSDSLPEFDIREQVREMSLEMAEKTEKYRKCKQMLAEEKARCSAYADDVAKMELKWKEQLKVNDSIKRQLIALDDQYKVQSAEKDREICDLSYSIETLRNEKAKMERFINDLEKKLEKQAGWAASNTQGLQFFNPYCDEHRLAPAIPAQQPLLQFGNPYASQETRDGADGAFNPDEVQGPPVRATSWGLEDKVVCSQPARNLSRPDGLEDPDENNAGLITKDEDDDDDDDNVNFEQTPDPTRIAMHDQSGFCFEAGYTMNKKCPLCPVSFPPNYDQGQFEAHVESHWKVCPMCNEQFPPDCDQQIFERHVQTHFDGSVLNFD.

Coiled-coil stretches lie at residues T173–R560 and Y612–G640. Residues M419 to R441 are disordered. Positions A431–R441 are enriched in basic and acidic residues. A disordered region spans residues Y678–P759. The span at D741 to V751 shows a compositional bias: acidic residues. 2 UBZ1-type zinc fingers span residues N779 to H805 and W806 to H832. Zn(2+)-binding residues include C782, C785, H801, H805, C809, C812, H828, and H832.

May have an anti-apoptotic activity. The sequence is that of Tax1-binding protein 1 homolog (tax1bp1) from Xenopus tropicalis (Western clawed frog).